The primary structure comprises 470 residues: Poly(A) polymerase catalytic subunit (470 aa).

Catalysis depends on residues aspartate 192 and aspartate 194.

The protein belongs to the poxviridae poly(A) polymerase catalytic subunit family. As to quaternary structure, heterodimer of a large (catalytic) subunit and a small (regulatory) subunit.

The enzyme catalyses RNA(n) + ATP = RNA(n)-3'-adenine ribonucleotide + diphosphate. In terms of biological role, polymerase that creates the 3'-poly(A) tail of mRNA's. In Oryctolagus cuniculus (Rabbit), this protein is Poly(A) polymerase catalytic subunit (PAPL).